The chain runs to 344 residues: Dihydroorotase (344 aa).

Residues His-14 and His-16 each contribute to the Zn(2+) site. Substrate contacts are provided by residues 16–18 (HLR) and Asn-42. Lys-100, His-137, and His-175 together coordinate Zn(2+). Lys-100 bears the N6-carboxylysine mark. Substrate is bound at residue His-137. Leu-220 provides a ligand contact to substrate. Asp-248 is a Zn(2+) binding site. Residue Asp-248 is part of the active site. Positions 252 and 264 each coordinate substrate.

This sequence belongs to the metallo-dependent hydrolases superfamily. DHOase family. Class II DHOase subfamily. Homodimer. Requires Zn(2+) as cofactor.

It catalyses the reaction (S)-dihydroorotate + H2O = N-carbamoyl-L-aspartate + H(+). It participates in pyrimidine metabolism; UMP biosynthesis via de novo pathway; (S)-dihydroorotate from bicarbonate: step 3/3. Catalyzes the reversible cyclization of carbamoyl aspartate to dihydroorotate. This is Dihydroorotase from Ralstonia nicotianae (strain ATCC BAA-1114 / GMI1000) (Ralstonia solanacearum).